The following is a 340-amino-acid chain: Probable quinone oxidoreductase (340 aa).

Belongs to the zinc-containing alcohol dehydrogenase family. Quinone oxidoreductase subfamily.

It carries out the reaction 2 a quinone + NADPH + H(+) = 2 a 1,4-benzosemiquinone + NADP(+). This Leishmania amazonensis protein is Probable quinone oxidoreductase.